Here is a 464-residue protein sequence, read N- to C-terminus: tRNA modification GTPase MnmE (464 aa).

3 residues coordinate (6S)-5-formyl-5,6,7,8-tetrahydrofolate: Arg-27, Glu-90, and Lys-129. One can recognise a TrmE-type G domain in the interval 222–384 (GIALVLAGSV…LYDKIRSLTC (163 aa)). GTP contacts are provided by residues 232-237 (NVGKSS), 251-257 (SSYAGTT), and 276-279 (DTAG). The Mg(2+) site is built by Ser-236 and Thr-257. Lys-464 contributes to the (6S)-5-formyl-5,6,7,8-tetrahydrofolate binding site.

It belongs to the TRAFAC class TrmE-Era-EngA-EngB-Septin-like GTPase superfamily. TrmE GTPase family. Homodimer. Heterotetramer of two MnmE and two MnmG subunits. K(+) is required as a cofactor.

It localises to the cytoplasm. Functionally, exhibits a very high intrinsic GTPase hydrolysis rate. Involved in the addition of a carboxymethylaminomethyl (cmnm) group at the wobble position (U34) of certain tRNAs, forming tRNA-cmnm(5)s(2)U34. In Borrelia turicatae (strain 91E135), this protein is tRNA modification GTPase MnmE.